A 153-amino-acid polypeptide reads, in one-letter code: MKTFVLHIFIFALVAFASASRDSAKKIGSQYDNYETCLTEHGLTDDDVFSIGEVSSGQHKTNHEDTELHKNGCVLQCMLEKDGLMSGADYDEEKMREDYIKETGAQPGDQRIEALNACMHETTDMEDKCDKSLLLVACVLAAEAVLADSNEGA.

The first 19 residues, 1-19 (MKTFVLHIFIFALVAFASA), serve as a signal peptide directing secretion. Disulfide bonds link C37–C77, C73–C129, and C118–C138.

Belongs to the PBP/GOBP family. As to quaternary structure, homodimer.

The protein localises to the secreted. In terms of biological role, colony queen number, a major feature of social organization, is associated with worker genotype for Gp-9. Colonies are headed by either a single reproductive queen (monogyne form) or multiple queens (polygyne form). Differences in worker Gp-9 genotypes between social forms may cause differences in workers' abilities to recognize queens and regulate their numbers. The protein is Pheromone-binding protein Gp-9 of Solenopsis saevissima (Fire ant).